Here is a 429-residue protein sequence, read N- to C-terminus: Threonine synthase (429 aa).

At K108 the chain carries N6-(pyridoxal phosphate)lysine.

It belongs to the threonine synthase family. The cofactor is pyridoxal 5'-phosphate.

It catalyses the reaction O-phospho-L-homoserine + H2O = L-threonine + phosphate. It functions in the pathway amino-acid biosynthesis; L-threonine biosynthesis; L-threonine from L-aspartate: step 5/5. In terms of biological role, catalyzes the gamma-elimination of phosphate from L-phosphohomoserine and the beta-addition of water to produce L-threonine. The polypeptide is Threonine synthase (thrC) (Buchnera aphidicola subsp. Acyrthosiphon pisum (strain APS) (Acyrthosiphon pisum symbiotic bacterium)).